Here is a 315-residue protein sequence, read N- to C-terminus: MERNELVNFVEGILKRIGFRTMKLEFRGGCFDLVATRQLLLLFIKALANIDKFSEEQAEDLKKLAKLFKASPLLVGLRSKNAELEDGVVYERFGIYAITPGTLYSMFAEGEPPLIIAERGGFYVRIDGKKLKALREEHGYSITELAGILGISRKSLQRYEKGESVVSLEVALRLEEVFDEPLVKPIDVLRARLKDVTLTSEPDNILEKEVFEKLRKLGMSVVKIKTAPFNAITKEEEDDIELLTGIDERKTGRTLKRAELVSQMAEVVGSDGVFVVKKARMEVVRNVPILPKKLLEEIKDADELLELIRDLKFKS.

Residues 131–189 (LKALREEHGYSITELAGILGISRKSLQRYEKGESVVSLEVALRLEEVFDEPLVKPIDVL) enclose the HTH cro/C1-type domain. A DNA-binding region (H-T-H motif) is located at residues 142–161 (ITELAGILGISRKSLQRYEK).

The sequence is that of Putative HTH-type transcriptional regulatory protein PH1808 from Pyrococcus horikoshii (strain ATCC 700860 / DSM 12428 / JCM 9974 / NBRC 100139 / OT-3).